Reading from the N-terminus, the 205-residue chain is Urease accessory protein UreG (205 aa).

14–21 (GPVGSGKT) provides a ligand contact to GTP.

This sequence belongs to the SIMIBI class G3E GTPase family. UreG subfamily. Homodimer. UreD, UreF and UreG form a complex that acts as a GTP-hydrolysis-dependent molecular chaperone, activating the urease apoprotein by helping to assemble the nickel containing metallocenter of UreC. The UreE protein probably delivers the nickel.

Its subcellular location is the cytoplasm. Facilitates the functional incorporation of the urease nickel metallocenter. This process requires GTP hydrolysis, probably effectuated by UreG. The chain is Urease accessory protein UreG from Escherichia coli O157:H7.